The chain runs to 32 residues: Cytochrome b6-f complex subunit 7 (32 aa).

The chain crosses the membrane as a helical span at residues 5–25 (IFGTAAIFWVLIPIGLVGGAL).

Belongs to the PetM family. As to quaternary structure, the 4 large subunits of the cytochrome b6-f complex are cytochrome b6, subunit IV (17 kDa polypeptide, PetD), cytochrome f and the Rieske protein, while the 4 small subunits are PetG, PetL, PetM and PetN. The complex functions as a dimer.

The protein resides in the cellular thylakoid membrane. In terms of biological role, component of the cytochrome b6-f complex, which mediates electron transfer between photosystem II (PSII) and photosystem I (PSI), cyclic electron flow around PSI, and state transitions. In Synechococcus sp. (strain CC9902), this protein is Cytochrome b6-f complex subunit 7.